The chain runs to 180 residues: UPF0149 protein XC_0904 (180 aa).

This sequence belongs to the UPF0149 family.

The chain is UPF0149 protein XC_0904 from Xanthomonas campestris pv. campestris (strain 8004).